The sequence spans 484 residues: Sialidase-4 (484 aa).

The FRIP motif motif lies at 22–25 (YRVP). Substrate is bound by residues Arg23 and Arg43. Residues Asp47 and Asp48 each act as proton acceptor in the active site. A BNR 1 repeat occupies 127 to 138 (VASRDAGLSWGS). Substrate-binding residues include Tyr177 and Tyr179. The stretch at 200–211 (FYSDDHGRTWRC) is one BNR 2 repeat. Substrate-binding residues include Glu222 and Arg242. The stretch at 251–262 (ALSTDEGTSFLP) is one BNR 3 repeat. A disordered region spans residues 284 to 357 (PAPAPNRPRD…GPRPGVSGDV (74 aa)). The span at 336-345 (RLQPRGDGPR) shows a compositional bias: low complexity. Position 389 (Arg389) interacts with substrate. Tyr419 functions as the Nucleophile in the catalytic mechanism. The active site involves Glu440.

Belongs to the glycosyl hydrolase 33 family. N-glycosylated. As to expression, predominant form in liver. Also expressed in brain, kidney and colon. Highly expressed in brain and at lower levels in kidney and liver.

It localises to the cell membrane. The protein resides in the endoplasmic reticulum membrane. Its subcellular location is the microsome membrane. It is found in the mitochondrion membrane. The protein localises to the cell projection. It localises to the neuron projection. The protein resides in the mitochondrion inner membrane. Its subcellular location is the mitochondrion outer membrane. It is found in the lysosome lumen. It carries out the reaction Hydrolysis of alpha-(2-&gt;3)-, alpha-(2-&gt;6)-, alpha-(2-&gt;8)- glycosidic linkages of terminal sialic acid residues in oligosaccharides, glycoproteins, glycolipids, colominic acid and synthetic substrates.. It catalyses the reaction a ganglioside GM3 + H2O = a beta-D-galactosyl-(1-&gt;4)-beta-D-glucosyl-(1&lt;-&gt;1)-ceramide + N-acetylneuraminate. The catalysed reaction is a ganglioside GM3 (d18:1(4E)) + H2O = a beta-D-Gal-(1-&gt;4)-beta-D-Glc-(1&lt;-&gt;1)-Cer(d18:1(4E)) + N-acetylneuraminate. The enzyme catalyses a ganglioside GM2 + H2O = a ganglioside GA2 + N-acetylneuraminate. It carries out the reaction a ganglioside GM2 (d18:1(4E)) + H2O = a ganglioside GA2 (d18:1(4E)) + N-acetylneuraminate. It catalyses the reaction a ganglioside GD1a + H2O = a ganglioside GM1 + N-acetylneuraminate. The catalysed reaction is a ganglioside GD1a (d18:1(4E)) + H2O = a ganglioside GM1 (d18:1(4E)) + N-acetylneuraminate. The enzyme catalyses a ganglioside GD3 + H2O = a ganglioside GM3 + N-acetylneuraminate. It carries out the reaction a ganglioside GD3 (d18:1(4E)) + H2O = a ganglioside GM3 (d18:1(4E)) + N-acetylneuraminate. Functionally, exo-alpha-sialidase that catalyzes the hydrolytic cleavage of the terminal sialic acid (N-acetylneuraminic acid, Neu5Ac) of a glycan moiety in the catabolism of glycolipids, glycoproteins and oligosacharides. Efficiently hydrolyzes gangliosides including alpha-(2-&gt;3)-sialylated GD1a and GM3 and alpha-(2-&gt;8)-sialylated GD3. Hydrolyzes poly-alpha-(2-&gt;8)-sialylated neural cell adhesion molecule NCAM1 likely at growth cones, suppressing neurite outgrowth in hippocampal neurons. May desialylate sialyl Lewis A and X antigens at the cell surface, down-regulating these glycan epitopes recognized by SELE/E selectin in the initiation of cell adhesion and extravasation. Has sialidase activity toward mucin, fetuin and sialyllactose. In Homo sapiens (Human), this protein is Sialidase-4 (NEU4).